A 276-amino-acid chain; its full sequence is Tryptophan synthase alpha chain (276 aa).

Active-site proton acceptor residues include Glu49 and Asp60.

The protein belongs to the TrpA family. Tetramer of two alpha and two beta chains.

The enzyme catalyses (1S,2R)-1-C-(indol-3-yl)glycerol 3-phosphate + L-serine = D-glyceraldehyde 3-phosphate + L-tryptophan + H2O. It participates in amino-acid biosynthesis; L-tryptophan biosynthesis; L-tryptophan from chorismate: step 5/5. The alpha subunit is responsible for the aldol cleavage of indoleglycerol phosphate to indole and glyceraldehyde 3-phosphate. This Acidiphilium cryptum (strain JF-5) protein is Tryptophan synthase alpha chain.